Here is a 236-residue protein sequence, read N- to C-terminus: MATTHLDVCAVVPAAGFGRRMQTECPKQYLSIGNQTILEHSVYALLAHPRVKRVVIAISPGDSRFAQLPLANHPQITVVDGGDERADSVLAGLKAAGDAQWVLVHDAARPCLHQDDLARLLALSETSRTGGILAAPVRDTMKRAEPGKNAIAHTVDRNGLWHALTPQFFPRELLHDCLTRALNEGAAITDEASALEYCGFHPQLVEGRADNIKVTRPEDLALAEFYLTRTIHQENT.

It belongs to the IspD/TarI cytidylyltransferase family. IspD subfamily. In terms of assembly, homodimer.

It carries out the reaction 2-C-methyl-D-erythritol 4-phosphate + CTP + H(+) = 4-CDP-2-C-methyl-D-erythritol + diphosphate. The protein operates within isoprenoid biosynthesis; isopentenyl diphosphate biosynthesis via DXP pathway; isopentenyl diphosphate from 1-deoxy-D-xylulose 5-phosphate: step 2/6. Functionally, catalyzes the formation of 4-diphosphocytidyl-2-C-methyl-D-erythritol from CTP and 2-C-methyl-D-erythritol 4-phosphate (MEP). The chain is 2-C-methyl-D-erythritol 4-phosphate cytidylyltransferase from Escherichia coli O157:H7.